A 406-amino-acid polypeptide reads, in one-letter code: Tryptophan 2,3-dioxygenase A (406 aa).

Residues 71-75 and Arg143 contribute to the substrate site; that span reads FIVTH. His327 serves as a coordination point for heme. Thr341 contacts substrate.

Belongs to the tryptophan 2,3-dioxygenase family. As to quaternary structure, homotetramer. Dimer of dimers. Heme serves as cofactor.

It catalyses the reaction L-tryptophan + O2 = N-formyl-L-kynurenine. The protein operates within amino-acid degradation; L-tryptophan degradation via kynurenine pathway; L-kynurenine from L-tryptophan: step 1/2. Heme-dependent dioxygenase that catalyzes the oxidative cleavage of the L-tryptophan (L-Trp) pyrrole ring and converts L-tryptophan to N-formyl-L-kynurenine. Catalyzes the oxidative cleavage of the indole moiety. This Danio rerio (Zebrafish) protein is Tryptophan 2,3-dioxygenase A.